The chain runs to 299 residues: MLSAGLGLLMLVAVVEFLIGLIGNGVLVVWSFREWIRKFSWSSYNLIILGLAGCRFVLQWLIILDLSLFPLFQSSRWLRYLSIFWVLVSQASLWFATFLSVFYCKKITTFDHPAYLWLKQRAYNLSLWCLLGYFIINLLLTVQIGLMFYHPPQGNSSIRYPFESWQYLYAFRLNSGSYLPLMVFLVSSGMLIVSLYTHHKKMKVHSAGRRDVRAKAHITALKSLGCFLLLHLVYIMASPFSIASKTYPPDLTSVFIWETLMAAYPSLHSLILIMGIPRVKQTCQKILWKTVCARRCWGP.

Residue M1 is a topological domain, extracellular. Residues 2-22 (LSAGLGLLMLVAVVEFLIGLI) traverse the membrane as a helical segment. Over 23-45 (GNGVLVVWSFREWIRKFSWSSYN) the chain is Cytoplasmic. Residues 46–66 (LIILGLAGCRFVLQWLIILDL) form a helical membrane-spanning segment. Over 67–82 (SLFPLFQSSRWLRYLS) the chain is Extracellular. The chain crosses the membrane as a helical span at residues 83–103 (IFWVLVSQASLWFATFLSVFY). Residues 104-127 (CKKITTFDHPAYLWLKQRAYNLSL) are Cytoplasmic-facing. Residues 128–148 (WCLLGYFIINLLLTVQIGLMF) form a helical membrane-spanning segment. The Extracellular portion of the chain corresponds to 149 to 175 (YHPPQGNSSIRYPFESWQYLYAFRLNS). N155 carries N-linked (GlcNAc...) asparagine glycosylation. A helical membrane pass occupies residues 176–196 (GSYLPLMVFLVSSGMLIVSLY). Topologically, residues 197-223 (THHKKMKVHSAGRRDVRAKAHITALKS) are cytoplasmic. A helical transmembrane segment spans residues 224–244 (LGCFLLLHLVYIMASPFSIAS). Residues 245-253 (KTYPPDLTS) lie on the Extracellular side of the membrane. The chain crosses the membrane as a helical span at residues 254-274 (VFIWETLMAAYPSLHSLILIM). The Cytoplasmic segment spans residues 275 to 299 (GIPRVKQTCQKILWKTVCARRCWGP).

The protein belongs to the G-protein coupled receptor T2R family.

It is found in the membrane. In terms of biological role, receptor that may play a role in the perception of bitterness and is gustducin-linked. May play a role in sensing the chemical composition of the gastrointestinal content. The activity of this receptor may stimulate alpha gustducin, mediate PLC-beta-2 activation and lead to the gating of TRPM5. This chain is Taste receptor type 2 member 5 (TAS2R5), found in Pan paniscus (Pygmy chimpanzee).